The following is a 393-amino-acid chain: Enoyl-[acyl-carrier-protein] reductase [NADH] (393 aa).

NAD(+) is bound by residues 48 to 53, 74 to 75, 111 to 112, and 139 to 140; these read GSSTGY, FE, DA, and LA. Y225 serves as a coordination point for substrate. The active-site Proton donor is Y235. Residues K244 and 273–275 each bind NAD(+); that span reads LVT.

It belongs to the TER reductase family. In terms of assembly, monomer.

The catalysed reaction is a 2,3-saturated acyl-[ACP] + NAD(+) = a (2E)-enoyl-[ACP] + NADH + H(+). Its pathway is lipid metabolism; fatty acid biosynthesis. Its function is as follows. Involved in the final reduction of the elongation cycle of fatty acid synthesis (FAS II). Catalyzes the reduction of a carbon-carbon double bond in an enoyl moiety that is covalently linked to an acyl carrier protein (ACP). This is Enoyl-[acyl-carrier-protein] reductase [NADH] from Pseudoalteromonas atlantica (strain T6c / ATCC BAA-1087).